Here is a 186-residue protein sequence, read N- to C-terminus: Translation initiation factor IF-3 (186 aa).

This sequence belongs to the IF-3 family. In terms of assembly, monomer.

The protein localises to the cytoplasm. Functionally, IF-3 binds to the 30S ribosomal subunit and shifts the equilibrium between 70S ribosomes and their 50S and 30S subunits in favor of the free subunits, thus enhancing the availability of 30S subunits on which protein synthesis initiation begins. This chain is Translation initiation factor IF-3, found in Borreliella burgdorferi (strain ATCC 35210 / DSM 4680 / CIP 102532 / B31) (Borrelia burgdorferi).